Here is a 183-residue protein sequence, read N- to C-terminus: DNA-directed RNA polymerase subunit Rpo7 (183 aa).

The region spanning 82 to 164 (HEVIEGEVSQ…RLPRIALTMK (83 aa)) is the S1 motif domain.

Belongs to the eukaryotic RPB7/RPC8 RNA polymerase subunit family. As to quaternary structure, part of the 13-subunit RNA polymerase complex. Forms a stalk with Rpo4 that extends from the main structure.

It is found in the cytoplasm. The enzyme catalyses RNA(n) + a ribonucleoside 5'-triphosphate = RNA(n+1) + diphosphate. Its function is as follows. DNA-dependent RNA polymerase (RNAP) catalyzes the transcription of DNA into RNA using the four ribonucleoside triphosphates as substrates. Functionally, reconstitution experiments show this subunit is required for basic activity. This is DNA-directed RNA polymerase subunit Rpo7 from Sulfolobus acidocaldarius (strain ATCC 33909 / DSM 639 / JCM 8929 / NBRC 15157 / NCIMB 11770).